The chain runs to 2090 residues: Nuclear pore complex protein Nup214 (2090 aa).

The residue at position 2 (G2) is an N-acetylglycine. S30 carries the post-translational modification Phosphoserine. Blade repeat units lie at residues 41–93 (LLAV…PMKF), 94–150 (PIHH…DAGG), 151–193 (MVID…PSTV), 194–239 (AVTS…ESDH), 240–303 (PVRV…ERQH), 304–359 (HYYL…KSDD), and 360–404 (SLPM…FYMI). Residues 41–404 (LLAVSNKYGL…DGVLCPFYMI (364 aa)) are seven-bladed beta propeller. Residues 236 to 1418 (ESDHPVRVLD…AVFGSLPVTS (1183 aa)) are 44 X 2 AA repeats of F-G. T416 carries the phosphothreonine modification. A phosphoserine mark is found at S421, S430, and S433. The interval 422–460 (LEGERQPKSPGSTPTTPTSSQAPQKLDASAAAAPASLPP) is disordered. The span at 429–441 (KSPGSTPTTPTSS) shows a compositional bias: low complexity. A phosphothreonine mark is found at T434, T437, and T439. Residues 450 to 586 (SAAAAPASLP…PPSTSAVKVN (137 aa)) are (Microbial infection) Binds human adenovirus 5 (HAdV-5) protein L3 (hexon). Residues 481-2076 (VFSFGSSSLK…GSGTGGFSFG (1596 aa)) form an 11 X 5 AA approximate repeats region. Repeat unit 1 spans residues 484-485 (FG). 2 stretches are compositionally biased toward low complexity: residues 489–513 (LKSS…KAAP) and 524–536 (PPSK…TPAA). A disordered region spans residues 489-536 (LKSSATVTGEPPSYSSGSDSSKAAPGPGPSTFSFVPPSKASLAPTPAA). Repeat 2 spans residues 548 to 549 (FG). Low complexity-rich tracts occupy residues 597-629 (STPV…HPTP) and 637-658 (VPLK…SSSP). The tract at residues 597-700 (STPVSSSQSA…KQGHQWKDSD (104 aa)) is disordered. Phosphoserine is present on residues S651, S657, and S666. A Phosphothreonine modification is found at T670. S678 carries the post-translational modification Phosphoserine. Residues 680 to 1209 (QAKSLQPAVA…VTSTPSASGQ (530 aa)) adopt a coiled-coil conformation. The span at 691-700 (KQGHQWKDSD) shows a compositional bias: basic and acidic residues. 2 leucine-zipper regions span residues 740-768 (LRTE…ISSL) and 861-882 (LANN…VDSL). S760 bears the Phosphoserine mark. Phosphoserine occurs at positions 940, 970, 974, and 989. Positions 987 to 1009 (TSSVSQSLESEDARTSCKDDEAV) are disordered. Positions 997-1007 (EDARTSCKDDE) are enriched in basic and acidic residues. T1021 is subject to Phosphothreonine. Phosphoserine is present on residues S1023, S1045, S1056, and S1081. Polar residues predominate over residues 1128–1149 (LKNNPATPSTAMGSSVPYSTAK). The interval 1128–1152 (LKNNPATPSTAMGSSVPYSTAKTPH) is disordered. 3 positions are modified to phosphothreonine: T1134, T1150, and T1156. Polar residues-rich tracts occupy residues 1168 to 1188 (LINS…SSGD) and 1199 to 1213 (AVTS…FSKP). Residues 1168-1213 (LINSLKPSGPTPASGQLSSGDKASGTAKIETAVTSTPSASGQFSKP) are disordered. A Phosphoserine modification is found at S1181. Residues 1225 to 1226 (FG) form repeat 3. 2 stretches are compositionally biased toward polar residues: residues 1234-1254 (SNFT…QPDA) and 1273-1285 (PPSG…NTTP). 2 disordered regions span residues 1234-1316 (SNFT…PPSK) and 1337-1408 (LRVG…TSST). Over residues 1288–1299 (PAASSSRPVAPS) the composition is skewed to low complexity. Positions 1301–1310 (TALSTTSSKL) are enriched in polar residues. Phosphothreonine is present on T1312. Residues 1347–1368 (KPTNKASSTSLTSTQPTKTSGV) show a composition bias toward polar residues. S1353 is subject to Phosphoserine. A compositionally biased stretch (low complexity) spans 1386–1408 (PPVTSSATTTSVAPPAATSTSST). Residues 1409 to 2084 (AVFGSLPVTS…FGSNNSSVQG (676 aa)) are 18 X 4 AA approximate repeats. A run of 4 repeats spans residues 1411-1412 (FG), 1427-1428 (FG), 1441-1442 (FG), and 1473-1474 (FG). The segment at 1427–2085 (FGGTSLSAGK…GSNNSSVQGF (659 aa)) is 11 X 3 AA approximate repeats. Positions 1438 to 1450 (SFSFGSQQTNSTV) are enriched in polar residues. Residues 1438–1467 (SFSFGSQQTNSTVPPSAPPPTTAATPLPTS) form a disordered region. 2 stretches are compositionally biased toward low complexity: residues 1479–1489 (SATTPSLPMSA) and 1508–1527 (SEVS…AQLP). The segment at 1479–1539 (SATTPSLPMS…PPQTSDSVKK (61 aa)) is disordered. Residue K1538 forms a Glycyl lysine isopeptide (Lys-Gly) (interchain with G-Cter in SUMO2) linkage. Repeat copies occupy residues 1635–1636 (FG), 1674–1675 (FG), 1686–1687 (FG), 1713–1714 (FG), 1721–1722 (FG), 1726–1727 (FG), 1732–1733 (FG), 1756–1757 (FG), 1772–1773 (FG), 1786–1787 (FG), 1798–1799 (FG), 1806–1807 (FG), 1812–1813 (FG), 1819–1820 (FG), 1842–1843 (FG), 1851–1852 (FG), 1862–1863 (FG), and 1874–1875 (FG). The interval 1884-1903 (GFFSGLGGKPSQDAANKNPF) is disordered. Repeat copies occupy residues 1910–1911 (FG), 1922–1923 (FG), 1930–1931 (FG), 1938–1939 (FG), and 1959–1960 (FG). S1963 carries the phosphoserine modification. Repeat copies occupy residues 1970-1971 (FG), 1976-1977 (FG), and 1982-1983 (FG). S1985 carries the post-translational modification Phosphoserine. A run of 11 repeats spans residues 1988–1989 (FG), 1994–1995 (FG), 2012–2013 (FG), 2024–2025 (FG), 2026–2027 (FG), 2035–2036 (FG), 2046–2047 (FG), 2056–2057 (FG), 2066–2067 (FG), 2075–2076 (FG), and 2085–2086 (FG).

As to quaternary structure, homodimer. Part of the nuclear pore complex (NPC). Interacts with NUP88. Interacts with ZFP36; this interaction increases upon lipopolysaccharide (LPS) stimulation. Interacts with DDX19. Interacts with XPO1. Interacts with XPO5. In terms of assembly, (Microbial infection) Interacts with human herpes virus 1 (HHV-1) protein UL25; this interaction might be essential to the capsid docking onto the host nuclear pore. (Microbial infection) Interacts (via N-terminus) with human adenovirus 5 (HAdV-5) protein L3 (hexon); this interaction might be essential for the release of the virus genome to the nucleus. Post-translationally, probably glycosylated as it reacts with wheat germ agglutinin (WGA). In terms of tissue distribution, expressed in thymus, spleen, bone marrow, kidney, brain and testis, but hardly in all other tissues or in whole embryos during development.

It localises to the nucleus. It is found in the nuclear pore complex. Part of the nuclear pore complex. Has a critical role in nucleocytoplasmic transport. May serve as a docking site in the receptor-mediated import of substrates across the nuclear pore complex. Its function is as follows. (Microbial infection) Required for capsid disassembly of the human adenovirus 5 (HadV-5) leading to release of the viral genome to the nucleus (in vitro). The polypeptide is Nuclear pore complex protein Nup214 (NUP214) (Homo sapiens (Human)).